A 71-amino-acid chain; its full sequence is Ubiquinol-cytochrome c reductase complex assembly factor 6 (71 aa).

Over 1–8 (MPAGVPMS) the chain is Mitochondrial matrix. A helical; Signal-anchor for type II membrane protein membrane pass occupies residues 9–25 (TYLKMFAASLLAMCAGA). The Mitochondrial intermembrane portion of the chain corresponds to 26-71 (EVVHRYYRPDLTIPEIPPKRGELKTELLGLKERKHKPQVSQQEELK).

This sequence belongs to the UQCC6 family. As to quaternary structure, interacts with UQCRC1. Interacts with UQCRQ. Interacts with UQCC5. Forms a complex, named COMB/coordinator of mitochondrial CYTB biogenesis, composed of UQCC1, UQCC2, UQCC4, UQCC5 and UQCC6; stabilizes nascent cytochrome b/MT-CYB and promotes its membrane insertion. Forms a complex, named COMA, composed of UQCC1, UQCC2 and UQCC4; activates MT-CYB translation. Forms a complex, named COMC, composed of UQCC1, UQCC2; UQCC3 and UQCC4; mediates MT-CYB hemylation and association with the first nuclear-encoded complex III subunit UQCRQ. Interacts with MT-CYB. In terms of tissue distribution, cardiac and skeletal muscle (at protein level).

The protein localises to the mitochondrion inner membrane. Functionally, required for the assembly and stability of the mitochondrial ubiquinol-cytochrome c reductase complex (complex III (CIII) or cytochrome b-c1 complex), a multisubunit transmembrane complex that is part of the mitochondrial electron transport chain (ETC) which drives oxidative phosphorylation. Mediates early complex III biogenesis. Participates in regulating the levels of electron transport chain proteins, and therefore energy supply, in response to changes in energy demand. Also required for cytochrome c oxidase complex (complex IV) assembly. In Homo sapiens (Human), this protein is Ubiquinol-cytochrome c reductase complex assembly factor 6.